The sequence spans 477 residues: Maternal protein exuperantia-2 (477 aa).

The segment covering 196–209 (KDGNSTKEDEHENP) has biased composition (basic and acidic residues). 2 disordered regions span residues 196-226 (KDGNSTKEDEHENPEGNSSITDNSGHKNQKQ) and 384-477 (TIKP…FADI). The segment covering 385-402 (IKPRCKRSGNGTRRRNRA) has biased composition (basic residues).

Functionally, ensures the proper localization of the mRNA of the bicoid gene to the anterior regions of the oocyte thus playing a fundamental role in the establishment of the polarity of the oocyte. May bind the bcd mRNA. In Drosophila pseudoobscura pseudoobscura (Fruit fly), this protein is Maternal protein exuperantia-2 (exu2).